A 381-amino-acid polypeptide reads, in one-letter code: Succinyl-diaminopimelate desuccinylase (381 aa).

His68 lines the Zn(2+) pocket. Asp70 is a catalytic residue. Residue Asp101 coordinates Zn(2+). The Proton acceptor role is filled by Glu135. Positions 136, 164, and 350 each coordinate Zn(2+).

This sequence belongs to the peptidase M20A family. DapE subfamily. In terms of assembly, homodimer. The cofactor is Zn(2+). Co(2+) is required as a cofactor.

The enzyme catalyses N-succinyl-(2S,6S)-2,6-diaminopimelate + H2O = (2S,6S)-2,6-diaminopimelate + succinate. It participates in amino-acid biosynthesis; L-lysine biosynthesis via DAP pathway; LL-2,6-diaminopimelate from (S)-tetrahydrodipicolinate (succinylase route): step 3/3. Catalyzes the hydrolysis of N-succinyl-L,L-diaminopimelic acid (SDAP), forming succinate and LL-2,6-diaminopimelate (DAP), an intermediate involved in the bacterial biosynthesis of lysine and meso-diaminopimelic acid, an essential component of bacterial cell walls. The polypeptide is Succinyl-diaminopimelate desuccinylase (Neisseria meningitidis serogroup A / serotype 4A (strain DSM 15465 / Z2491)).